Consider the following 177-residue polypeptide: Large ribosomal subunit protein uL6 (177 aa).

The protein belongs to the universal ribosomal protein uL6 family. As to quaternary structure, part of the 50S ribosomal subunit.

Its function is as follows. This protein binds to the 23S rRNA, and is important in its secondary structure. It is located near the subunit interface in the base of the L7/L12 stalk, and near the tRNA binding site of the peptidyltransferase center. This chain is Large ribosomal subunit protein uL6, found in Chromobacterium violaceum (strain ATCC 12472 / DSM 30191 / JCM 1249 / CCUG 213 / NBRC 12614 / NCIMB 9131 / NCTC 9757 / MK).